The sequence spans 324 residues: Viral cathepsin (324 aa).

Positions 1–16 are cleaved as a signal peptide; the sequence is MNKIMLCLLVCGVVHA. The propeptide at 17–113 is activation peptide; sequence ATYDLLKAPN…VILDRPPDRG (97 aa). 3 disulfide bridges follow: Cys-134-Cys-175, Cys-168-Cys-208, and Cys-263-Cys-311. The active site involves Cys-137. N-linked (GlcNAc...) asparagine; by host glycosylation occurs at Asn-159. Catalysis depends on residues His-270 and Asn-290.

This sequence belongs to the peptidase C1 family. Post-translationally, synthesized as an inactive proenzyme and activated by proteolytic removal of the inhibitory propeptide.

The catalysed reaction is Endopeptidase of broad specificity, hydrolyzing substrates of both cathepsin L and cathepsin B.. Functionally, cysteine protease that plays an essential role in host liquefaction to facilitate horizontal transmission of the virus. May participate in the degradation of foreign protein expressed by the baculovirus system. The sequence is that of Viral cathepsin (VCATH) from Orgyia pseudotsugata (Douglas-fir tussock moth).